Consider the following 140-residue polypeptide: Putative pre-16S rRNA nuclease (140 aa).

The protein belongs to the YqgF nuclease family.

The protein localises to the cytoplasm. Could be a nuclease involved in processing of the 5'-end of pre-16S rRNA. This chain is Putative pre-16S rRNA nuclease, found in Lachnospira eligens (strain ATCC 27750 / DSM 3376 / VPI C15-48 / C15-B4) (Eubacterium eligens).